A 441-amino-acid polypeptide reads, in one-letter code: Cytochrome c biogenesis protein Ccs1 (441 aa).

A run of 3 helical transmembrane segments spans residues 19–39 (LKLA…GTVI), 78–98 (TWWF…CTLA), and 164–184 (IGPI…LLGN).

Belongs to the Ccs1/CcsB family. As to quaternary structure, may interact with CcsA.

The protein resides in the plastid. It localises to the chloroplast thylakoid membrane. Required during biogenesis of c-type cytochromes (cytochrome c6 and cytochrome f) at the step of heme attachment. This is Cytochrome c biogenesis protein Ccs1 from Rhodomonas salina (Cryptomonas salina).